The chain runs to 282 residues: Keratin-associated protein 10-1 (282 aa).

A run of 24 repeats spans residues 26–30, 31–35, 36–40, 57–61, 79–83, 89–93, 99–103, 104–108, 109–113, 121–125, 131–135, 141–145, 146–150, 163–167, 173–177, 183–187, 193–197, 198–202, 210–214, 220–224, 225–229, 244–248, 251–255, and 262–266. The segment at 26–266 is 24 X 5 AA repeats of C-C-X(3); that stretch reads CCEPHCCALS…SCQASCCRPA (241 aa).

It belongs to the KRTAP type 10 family. Interacts with hair keratins. In terms of tissue distribution, restricted to a narrow region of the hair fiber cuticle, lying approximately 20 cell layers above the apex of the dermal papilla of the hair root; not detected in any other tissues.

Functionally, in the hair cortex, hair keratin intermediate filaments are embedded in an interfilamentous matrix, consisting of hair keratin-associated proteins (KRTAP), which are essential for the formation of a rigid and resistant hair shaft through their extensive disulfide bond cross-linking with abundant cysteine residues of hair keratins. The matrix proteins include the high-sulfur and high-glycine-tyrosine keratins. In Homo sapiens (Human), this protein is Keratin-associated protein 10-1 (KRTAP10-1).